The chain runs to 1242 residues: von Willebrand factor A domain-containing protein 5B2 (1242 aa).

Residues 1–138 form the VIT domain; that stretch reads MPGLYCPSSW…TMTVTLHSSR (138 aa). Positions 354–527 constitute a VWFA domain; that stretch reads ELLFLLDSSS…KALEPALSDI (174 aa). Disordered regions lie at residues 569–650, 670–726, 751–794, 957–976, 987–1055, and 1118–1159; these read SRPP…SDTA, CSAS…CPLP, LAGR…GQGL, CSSE…SHLD, KGLQ…GSDH, and QGDS…GLGG. Residues 588 to 604 show a composition bias toward low complexity; the sequence is PSPEEAPSAASPGTEPT. Residues 605 to 619 show a composition bias toward polar residues; it reads GTSEPLGTGTVSAEL. The span at 681–700 shows a compositional bias: low complexity; that stretch reads TGSSESPGSQGPGSPEGSAP. Positions 1125–1138 are enriched in low complexity; sequence SCSPSPSSGSEGPG.

This Homo sapiens (Human) protein is von Willebrand factor A domain-containing protein 5B2 (VWA5B2).